The following is a 149-amino-acid chain: Phosphoribosyl-AMP cyclohydrolase (149 aa).

D92 provides a ligand contact to Mg(2+). C93 is a binding site for Zn(2+). Mg(2+) contacts are provided by D94 and D96. Zn(2+) is bound by residues C111 and C118.

This sequence belongs to the PRA-CH family. As to quaternary structure, homodimer. The cofactor is Mg(2+). Zn(2+) serves as cofactor.

It localises to the cytoplasm. It catalyses the reaction 1-(5-phospho-beta-D-ribosyl)-5'-AMP + H2O = 1-(5-phospho-beta-D-ribosyl)-5-[(5-phospho-beta-D-ribosylamino)methylideneamino]imidazole-4-carboxamide. Its pathway is amino-acid biosynthesis; L-histidine biosynthesis; L-histidine from 5-phospho-alpha-D-ribose 1-diphosphate: step 3/9. Catalyzes the hydrolysis of the adenine ring of phosphoribosyl-AMP. This Rhizobium rhizogenes (strain K84 / ATCC BAA-868) (Agrobacterium radiobacter) protein is Phosphoribosyl-AMP cyclohydrolase.